A 654-amino-acid chain; its full sequence is DNA ligase (654 aa).

NAD(+)-binding positions include 37-41, 86-87, and Glu113; these read DEEYD and SM. Residue Lys115 is the N6-AMP-lysine intermediate of the active site. Residues Arg136, Glu170, and Lys308 each coordinate NAD(+). Cys402, Cys405, Cys418, and Cys423 together coordinate Zn(2+). The region spanning 576–654 is the BRCT domain; the sequence is ITQNAFSGKS…GEFERLKLEI (79 aa).

This sequence belongs to the NAD-dependent DNA ligase family. LigA subfamily. Requires Mg(2+) as cofactor. Mn(2+) is required as a cofactor.

The enzyme catalyses NAD(+) + (deoxyribonucleotide)n-3'-hydroxyl + 5'-phospho-(deoxyribonucleotide)m = (deoxyribonucleotide)n+m + AMP + beta-nicotinamide D-nucleotide.. DNA ligase that catalyzes the formation of phosphodiester linkages between 5'-phosphoryl and 3'-hydroxyl groups in double-stranded DNA using NAD as a coenzyme and as the energy source for the reaction. It is essential for DNA replication and repair of damaged DNA. The sequence is that of DNA ligase from Campylobacter curvus (strain 525.92).